We begin with the raw amino-acid sequence, 366 residues long: Flagellar P-ring protein (366 aa).

Positions 1–20 (MVIKFLSALILLLVTTAAQA) are cleaved as a signal peptide.

Belongs to the FlgI family. As to quaternary structure, the basal body constitutes a major portion of the flagellar organelle and consists of four rings (L,P,S, and M) mounted on a central rod.

It is found in the periplasm. It localises to the bacterial flagellum basal body. Its function is as follows. Assembles around the rod to form the L-ring and probably protects the motor/basal body from shearing forces during rotation. In Escherichia coli (strain SE11), this protein is Flagellar P-ring protein.